The sequence spans 230 residues: Ion-translocating oxidoreductase complex subunit E (230 aa).

6 helical membrane passes run 18 to 38, 39 to 59, 63 to 83, 86 to 106, 125 to 145, and 182 to 202; these read ALVQ…ATNA, LGLG…VSAL, TPAE…VSAV, LINA…PLIV, WLSA…MFVL, and PFLL…MLAV.

This sequence belongs to the NqrDE/RnfAE family. The complex is composed of six subunits: RsxA, RsxB, RsxC, RsxD, RsxE and RsxG.

The protein localises to the cell inner membrane. In terms of biological role, part of a membrane-bound complex that couples electron transfer with translocation of ions across the membrane. Required to maintain the reduced state of SoxR. This is Ion-translocating oxidoreductase complex subunit E from Salmonella newport (strain SL254).